The sequence spans 130 residues: Small ribosomal subunit protein bS6 (130 aa).

Positions 100–130 are disordered; that stretch reads SPMVKAKDERRERREDFAEAGDDVDAGDSEE. The span at 104-116 shows a compositional bias: basic and acidic residues; the sequence is KAKDERRERREDF. Residues 117–130 show a composition bias toward acidic residues; it reads AEAGDDVDAGDSEE.

Belongs to the bacterial ribosomal protein bS6 family.

Its function is as follows. Binds together with bS18 to 16S ribosomal RNA. In Pectobacterium carotovorum subsp. carotovorum (strain PC1), this protein is Small ribosomal subunit protein bS6.